We begin with the raw amino-acid sequence, 85 residues long: Translation initiation factor IF-1 1 (85 aa).

The S1-like domain maps to 1–72 (MSKEDLIEMQ…NKGRLTFRHI (72 aa)).

Belongs to the IF-1 family. Component of the 30S ribosomal translation pre-initiation complex which assembles on the 30S ribosome in the order IF-2 and IF-3, IF-1 and N-formylmethionyl-tRNA(fMet); mRNA recruitment can occur at any time during PIC assembly.

The protein localises to the cytoplasm. One of the essential components for the initiation of protein synthesis. Stabilizes the binding of IF-2 and IF-3 on the 30S subunit to which N-formylmethionyl-tRNA(fMet) subsequently binds. Helps modulate mRNA selection, yielding the 30S pre-initiation complex (PIC). Upon addition of the 50S ribosomal subunit IF-1, IF-2 and IF-3 are released leaving the mature 70S translation initiation complex. In Paracidovorax citrulli (strain AAC00-1) (Acidovorax citrulli), this protein is Translation initiation factor IF-1 1.